The primary structure comprises 48 residues: Large ribosomal subunit protein bL32 (48 aa).

The tract at residues 1-20 (MAVPDRRVSKTRAAKRRTHY) is disordered. A compositionally biased stretch (basic residues) spans 9–20 (SKTRAAKRRTHY).

The protein belongs to the bacterial ribosomal protein bL32 family.

In Helicobacter acinonychis (strain Sheeba), this protein is Large ribosomal subunit protein bL32.